The following is a 440-amino-acid chain: Enolase (440 aa).

Gln-168 serves as a coordination point for (2R)-2-phosphoglycerate. The active-site Proton donor is the Glu-210. 3 residues coordinate Mg(2+): Asp-249, Glu-300, and Asp-326. (2R)-2-phosphoglycerate is bound by residues Lys-351, Arg-380, Ser-381, and Lys-402. Lys-351 serves as the catalytic Proton acceptor.

This sequence belongs to the enolase family. Requires Mg(2+) as cofactor.

The protein localises to the cytoplasm. It is found in the secreted. It localises to the cell surface. It carries out the reaction (2R)-2-phosphoglycerate = phosphoenolpyruvate + H2O. Its pathway is carbohydrate degradation; glycolysis; pyruvate from D-glyceraldehyde 3-phosphate: step 4/5. In terms of biological role, catalyzes the reversible conversion of 2-phosphoglycerate (2-PG) into phosphoenolpyruvate (PEP). It is essential for the degradation of carbohydrates via glycolysis. This chain is Enolase, found in Ureaplasma parvum serovar 3 (strain ATCC 27815 / 27 / NCTC 11736).